An 89-amino-acid chain; its full sequence is Large ribosomal subunit protein bL28 (89 aa).

Belongs to the bacterial ribosomal protein bL28 family.

In Chlamydia pneumoniae (Chlamydophila pneumoniae), this protein is Large ribosomal subunit protein bL28.